Reading from the N-terminus, the 330-residue chain is D-cysteine desulfhydrase (330 aa).

Lys-52 is subject to N6-(pyridoxal phosphate)lysine.

It belongs to the ACC deaminase/D-cysteine desulfhydrase family. As to quaternary structure, homodimer. Pyridoxal 5'-phosphate serves as cofactor.

The catalysed reaction is D-cysteine + H2O = hydrogen sulfide + pyruvate + NH4(+) + H(+). In terms of biological role, catalyzes the alpha,beta-elimination reaction of D-cysteine and of several D-cysteine derivatives. It could be a defense mechanism against D-cysteine. The sequence is that of D-cysteine desulfhydrase from Yersinia pestis.